The sequence spans 76 residues: Large ribosomal subunit protein bL31 (76 aa).

Belongs to the bacterial ribosomal protein bL31 family. Type A subfamily. Part of the 50S ribosomal subunit.

Binds the 23S rRNA. In Methylocella silvestris (strain DSM 15510 / CIP 108128 / LMG 27833 / NCIMB 13906 / BL2), this protein is Large ribosomal subunit protein bL31.